A 672-amino-acid polypeptide reads, in one-letter code: tRNA 5-methylaminomethyl-2-thiouridine biosynthesis bifunctional protein MnmC (672 aa).

Residues 1-243 (MTSITHAELG…KREMIAGCME (243 aa)) are tRNA (mnm(5)s(2)U34)-methyltransferase. Positions 269 to 672 (IGGGIASAAL…LRKGKAITEL (404 aa)) are FAD-dependent cmnm(5)s(2)U34 oxidoreductase.

In the N-terminal section; belongs to the methyltransferase superfamily. tRNA (mnm(5)s(2)U34)-methyltransferase family. It in the C-terminal section; belongs to the DAO family. FAD serves as cofactor.

It is found in the cytoplasm. The catalysed reaction is 5-aminomethyl-2-thiouridine(34) in tRNA + S-adenosyl-L-methionine = 5-methylaminomethyl-2-thiouridine(34) in tRNA + S-adenosyl-L-homocysteine + H(+). In terms of biological role, catalyzes the last two steps in the biosynthesis of 5-methylaminomethyl-2-thiouridine (mnm(5)s(2)U) at the wobble position (U34) in tRNA. Catalyzes the FAD-dependent demodification of cmnm(5)s(2)U34 to nm(5)s(2)U34, followed by the transfer of a methyl group from S-adenosyl-L-methionine to nm(5)s(2)U34, to form mnm(5)s(2)U34. This Vibrio vulnificus (strain YJ016) protein is tRNA 5-methylaminomethyl-2-thiouridine biosynthesis bifunctional protein MnmC.